The following is an 878-amino-acid chain: Phosphoenolpyruvate carboxylase (878 aa).

Catalysis depends on residues histidine 137 and lysine 545.

This sequence belongs to the PEPCase type 1 family. Mg(2+) serves as cofactor.

It carries out the reaction oxaloacetate + phosphate = phosphoenolpyruvate + hydrogencarbonate. Forms oxaloacetate, a four-carbon dicarboxylic acid source for the tricarboxylic acid cycle. The polypeptide is Phosphoenolpyruvate carboxylase (Serratia proteamaculans (strain 568)).